Here is a 413-residue protein sequence, read N- to C-terminus: Intracellular hyaluronan-binding protein 4 (413 aa).

A phosphoserine mark is found at Ser7 and Ser36. Positions 40 to 64 (DILREAERRRQQQLQRKRRDEAAAA) form a coiled coil. The disordered stretch occupies residues 42–206 (LREAERRRQQ…RGGPGNRVFD (165 aa)). Residues 62 to 82 (AAAAGAGPRGGRSPAGASGHR) show a composition bias toward low complexity. Arg70 carries the post-translational modification Omega-N-methylarginine. Position 74 is a phosphoserine (Ser74). Basic and acidic residues predominate over residues 87-97 (GRRESQKERKS). Ser108 carries the post-translational modification Phosphoserine. Over residues 139–182 (MLERAERRSYREYRPYETERQADFTAEKFPDEKPGDRFDRDRPL) the composition is skewed to basic and acidic residues. The span at 184–201 (GRGGPRGGMRGRGRGGPG) shows a compositional bias: gly residues. Residues Lys213 and Lys276 each participate in a glycyl lysine isopeptide (Lys-Gly) (interchain with G-Cter in SUMO1); alternate cross-link. Residues Lys213 and Lys276 each participate in a glycyl lysine isopeptide (Lys-Gly) (interchain with G-Cter in SUMO2); alternate cross-link. Residues 227–320 (VRTEDNMGGC…IRKPESTVPS (94 aa)) are disordered. The segment covering 294–315 (DEWKNLQEQTRPKPEFNIRKPE) has biased composition (basic and acidic residues). Lys336 participates in a covalent cross-link: Glycyl lysine isopeptide (Lys-Gly) (interchain with G-Cter in SUMO1); alternate. Lys336 is covalently cross-linked (Glycyl lysine isopeptide (Lys-Gly) (interchain with G-Cter in SUMO2); alternate). Thr354 and Thr375 each carry phosphothreonine; by PKC. Residues 360–413 (NFGNLPRPGRGARGGTRGGRGRIRRAENYGPRAEVVMQDVAPNPDDPEDFPALS) are disordered. Residues 404–413 (DDPEDFPALS) show a composition bias toward acidic residues.

The protein belongs to the SERBP1-HABP4 family. In terms of assembly, associates with ribosomes; promoting ribosome stabilization. Interacts with EEF2/eEF2; promoting ribosome stabilization. Interacts with FMR1. Interacts with FXR1 and FXR2. Interacts with CHD3 (via C-terminus). Interacts (via C-terminus) with RACK1. Interacts with p53/TP53. Interacts (via N-terminus) with SRSF9; this interaction is direct. Interacts with SYNCRIP; this interaction is direct. Interacts with MEF2C (via N-terminus); this interaction decreases DNA-binding activity of MEF2C in myocardial cells in response to mechanical stress. Interacts with PRMT1 (via N-terminus). Interacts with SPIN1. Post-translationally, methylated. Methylation is decreased by phorbol 12-myristate 13-acetate (PMA)-activated PKC, in vitro. In terms of processing, phosphorylated by phorbol 12-myristate 13-acetate (PMA)-activated PKC isoforms at Thr-354 and Thr-375. In terms of tissue distribution, highly expressed in brain, heart, and kidney, and moderately expressed in skeletal muscle. Also expressed in a variety of tumor cell lines and in activated but not resting leukocytes.

It localises to the nucleus. The protein resides in the cytoplasm. It is found in the stress granule. Its subcellular location is the sarcoplasm. The protein localises to the nuclear body. It localises to the nucleolus. The protein resides in the nucleus speckle. It is found in the cajal body. Its subcellular location is the gem. Functionally, ribosome-binding protein that promotes ribosome hibernation, a process during which ribosomes are stabilized in an inactive state and preserved from proteasomal degradation. Acts via its association with EEF2/eEF2 factor at the A-site of the ribosome, promoting ribosome stabilization in an inactive state compatible with storage. Plays a key role in ribosome hibernation in the mature oocyte by promoting ribosome stabilization. Ribosomes, which are produced in large quantities during oogenesis, are stored and translationally repressed in the oocyte and early embryo. Also binds RNA, regulating transcription and pre-mRNA splicing. Binds (via C-terminus) to poly(U) RNA. Seems to play a role in PML-nuclear bodies formation. Negatively regulates DNA-binding activity of the transcription factor MEF2C in myocardial cells in response to mechanical stress. The protein is Intracellular hyaluronan-binding protein 4 of Homo sapiens (Human).